Reading from the N-terminus, the 116-residue chain is Ribosome-binding factor A (116 aa).

The protein belongs to the RbfA family. In terms of assembly, monomer. Binds 30S ribosomal subunits, but not 50S ribosomal subunits or 70S ribosomes.

The protein localises to the cytoplasm. Its function is as follows. One of several proteins that assist in the late maturation steps of the functional core of the 30S ribosomal subunit. Associates with free 30S ribosomal subunits (but not with 30S subunits that are part of 70S ribosomes or polysomes). Required for efficient processing of 16S rRNA. May interact with the 5'-terminal helix region of 16S rRNA. This chain is Ribosome-binding factor A, found in Malacoplasma penetrans (strain HF-2) (Mycoplasma penetrans).